The sequence spans 302 residues: Sulfate adenylyltransferase subunit 2 (302 aa).

It belongs to the PAPS reductase family. CysD subfamily. As to quaternary structure, heterodimer composed of CysD, the smaller subunit, and CysN.

It carries out the reaction sulfate + ATP + H(+) = adenosine 5'-phosphosulfate + diphosphate. Its pathway is sulfur metabolism; hydrogen sulfide biosynthesis; sulfite from sulfate: step 1/3. With CysN forms the ATP sulfurylase (ATPS) that catalyzes the adenylation of sulfate producing adenosine 5'-phosphosulfate (APS) and diphosphate, the first enzymatic step in sulfur assimilation pathway. APS synthesis involves the formation of a high-energy phosphoric-sulfuric acid anhydride bond driven by GTP hydrolysis by CysN coupled to ATP hydrolysis by CysD. This chain is Sulfate adenylyltransferase subunit 2, found in Sodalis glossinidius (strain morsitans).